The following is a 195-amino-acid chain: ATP-dependent Clp protease proteolytic subunit (195 aa).

The Nucleophile role is filled by S94. H119 is an active-site residue.

Belongs to the peptidase S14 family. Component of the chloroplastic Clp protease core complex.

It is found in the plastid. Its subcellular location is the chloroplast stroma. The enzyme catalyses Hydrolysis of proteins to small peptides in the presence of ATP and magnesium. alpha-casein is the usual test substrate. In the absence of ATP, only oligopeptides shorter than five residues are hydrolyzed (such as succinyl-Leu-Tyr-|-NHMec, and Leu-Tyr-Leu-|-Tyr-Trp, in which cleavage of the -Tyr-|-Leu- and -Tyr-|-Trp bonds also occurs).. In terms of biological role, cleaves peptides in various proteins in a process that requires ATP hydrolysis. Has a chymotrypsin-like activity. Plays a major role in the degradation of misfolded proteins. The chain is ATP-dependent Clp protease proteolytic subunit from Cycas taitungensis (Prince sago).